The chain runs to 274 residues: Putative pyruvate, phosphate dikinase regulatory protein (274 aa).

Position 149–156 (149–156 (GVSRSSKT)) interacts with ADP.

The protein belongs to the pyruvate, phosphate/water dikinase regulatory protein family. PDRP subfamily.

It catalyses the reaction N(tele)-phospho-L-histidyl/L-threonyl-[pyruvate, phosphate dikinase] + ADP = N(tele)-phospho-L-histidyl/O-phospho-L-threonyl-[pyruvate, phosphate dikinase] + AMP + H(+). It carries out the reaction N(tele)-phospho-L-histidyl/O-phospho-L-threonyl-[pyruvate, phosphate dikinase] + phosphate + H(+) = N(tele)-phospho-L-histidyl/L-threonyl-[pyruvate, phosphate dikinase] + diphosphate. Bifunctional serine/threonine kinase and phosphorylase involved in the regulation of the pyruvate, phosphate dikinase (PPDK) by catalyzing its phosphorylation/dephosphorylation. The polypeptide is Putative pyruvate, phosphate dikinase regulatory protein (Rhizorhabdus wittichii (strain DSM 6014 / CCUG 31198 / JCM 15750 / NBRC 105917 / EY 4224 / RW1) (Sphingomonas wittichii)).